The primary structure comprises 139 residues: MRTLWIVAVWLMGVEGNLYQFGKMIKNKTGKPAMFSYSAYGCYCGWGGQGKPQDPSDRCCFMHDCCYTRVNNCSPKMTLYSYRFENGDIICGDNDPCRKAVCECDREAAICLGENVNTYDEKYRFYSSSYCTEEESEKC.

A signal peptide spans 1-16 (MRTLWIVAVWLMGVEG). Intrachain disulfides connect C42/C131, C44/C60, C59/C111, C65/C139, C66/C104, C73/C97, and C91/C102. Ca(2+)-binding residues include Y43, G45, and G47. H63 is a catalytic residue. D64 is a binding site for Ca(2+). D105 is an active-site residue.

The protein belongs to the phospholipase A2 family. Group II subfamily. D49 sub-subfamily. Ca(2+) is required as a cofactor. As to expression, expressed by the venom gland.

It is found in the secreted. It catalyses the reaction a 1,2-diacyl-sn-glycero-3-phosphocholine + H2O = a 1-acyl-sn-glycero-3-phosphocholine + a fatty acid + H(+). In terms of biological role, PLA2 catalyzes the calcium-dependent hydrolysis of the 2-acyl groups in 3-sn-phosphoglycerides. This Echis pyramidum leakeyi (Leakey's carpet viper) protein is Acidic phospholipase A2 5.